Here is a 226-residue protein sequence, read N- to C-terminus: Thioredoxin domain-containing protein 9 (226 aa).

The region spanning 75–180 is the Thioredoxin domain; the sequence is EIGSERDFFQ…TTETLEWRLG (106 aa). A phosphoserine mark is found at serine 188, serine 221, and serine 223.

In terms of assembly, forms ternary complexes with the chaperonin TCP1 complex, spanning the cylindrical chaperonin cavity and contacting at least 2 subunits.

The protein localises to the cytoplasm. It is found in the nucleus. Its subcellular location is the cytoskeleton. It localises to the microtubule organizing center. The protein resides in the centrosome. The protein localises to the midbody. In terms of biological role, significantly diminishes the chaperonin TCP1 complex ATPase activity, thus negatively impacts protein folding, including that of actin or tubulin. The polypeptide is Thioredoxin domain-containing protein 9 (Txndc9) (Rattus norvegicus (Rat)).